A 105-amino-acid chain; its full sequence is Protein LBH (105 aa).

The 87-residue stretch at 18-104 (MTEVMMNTQP…CEETAKENKE (87 aa)) folds into the LBH domain. Position 63 is a phosphoserine (Ser-63). The span at 86–96 (LVQEDEQDNCE) shows a compositional bias: acidic residues. Residues 86 to 105 (LVQEDEQDNCEETAKENKEQ) form a disordered region.

The protein belongs to the LBH family. Highly expressed in heart, and expressed at low levels in placenta, lung, skeletal muscle, kidney and liver.

The protein localises to the nucleus. It localises to the cytoplasm. Its function is as follows. Transcriptional activator which may act in mitogen-activated protein kinase signaling pathway. The protein is Protein LBH of Homo sapiens (Human).